A 240-amino-acid polypeptide reads, in one-letter code: 6-phosphogluconolactonase (240 aa).

This sequence belongs to the glucosamine/galactosamine-6-phosphate isomerase family. 6-phosphogluconolactonase subfamily.

The enzyme catalyses 6-phospho-D-glucono-1,5-lactone + H2O = 6-phospho-D-gluconate + H(+). The protein operates within carbohydrate degradation; pentose phosphate pathway; D-ribulose 5-phosphate from D-glucose 6-phosphate (oxidative stage): step 2/3. Functionally, hydrolysis of 6-phosphogluconolactone to 6-phosphogluconate. This is 6-phosphogluconolactonase (pgl) from Synechocystis sp. (strain ATCC 27184 / PCC 6803 / Kazusa).